The following is a 401-amino-acid chain: Tyrosine--tRNA ligase (401 aa).

Positions 42-51 (PTAPDLHLGH) match the 'HIGH' region motif. The short motif at 226–230 (KMSKS) is the 'KMSKS' region element. K229 is a binding site for ATP. The S4 RNA-binding domain occupies 336–397 (IALAQLLKQI…GKRRIAKLSI (62 aa)).

The protein belongs to the class-I aminoacyl-tRNA synthetase family. TyrS type 2 subfamily. In terms of assembly, homodimer.

The protein resides in the cytoplasm. It catalyses the reaction tRNA(Tyr) + L-tyrosine + ATP = L-tyrosyl-tRNA(Tyr) + AMP + diphosphate + H(+). Its function is as follows. Catalyzes the attachment of tyrosine to tRNA(Tyr) in a two-step reaction: tyrosine is first activated by ATP to form Tyr-AMP and then transferred to the acceptor end of tRNA(Tyr). The protein is Tyrosine--tRNA ligase of Legionella pneumophila subsp. pneumophila (strain Philadelphia 1 / ATCC 33152 / DSM 7513).